Reading from the N-terminus, the 427-residue chain is UDP-N-acetylglucosamine 1-carboxyvinyltransferase 2 (427 aa).

19–20 contacts phosphoenolpyruvate; the sequence is KN. Arg91 is a binding site for UDP-N-acetyl-alpha-D-glucosamine. Cys115 functions as the Proton donor in the catalytic mechanism. At Cys115 the chain carries 2-(S-cysteinyl)pyruvic acid O-phosphothioketal. UDP-N-acetyl-alpha-D-glucosamine-binding residues include Asp307 and Val329.

This sequence belongs to the EPSP synthase family. MurA subfamily.

Its subcellular location is the cytoplasm. It carries out the reaction phosphoenolpyruvate + UDP-N-acetyl-alpha-D-glucosamine = UDP-N-acetyl-3-O-(1-carboxyvinyl)-alpha-D-glucosamine + phosphate. The protein operates within cell wall biogenesis; peptidoglycan biosynthesis. Functionally, cell wall formation. Adds enolpyruvyl to UDP-N-acetylglucosamine. The sequence is that of UDP-N-acetylglucosamine 1-carboxyvinyltransferase 2 from Prochlorococcus marinus (strain SARG / CCMP1375 / SS120).